Reading from the N-terminus, the 276-residue chain is 2-dehydro-3-deoxyphosphooctonate aldolase (276 aa).

Belongs to the KdsA family.

The protein localises to the cytoplasm. It catalyses the reaction D-arabinose 5-phosphate + phosphoenolpyruvate + H2O = 3-deoxy-alpha-D-manno-2-octulosonate-8-phosphate + phosphate. It functions in the pathway carbohydrate biosynthesis; 3-deoxy-D-manno-octulosonate biosynthesis; 3-deoxy-D-manno-octulosonate from D-ribulose 5-phosphate: step 2/3. It participates in bacterial outer membrane biogenesis; lipopolysaccharide biosynthesis. In Helicobacter pylori (strain HPAG1), this protein is 2-dehydro-3-deoxyphosphooctonate aldolase.